Reading from the N-terminus, the 465-residue chain is GTPase Der (465 aa).

EngA-type G domains follow at residues 3–166 (FLVA…LNEY) and 184–358 (IHFS…ACAN). Residues 9 to 16 (GRANVGKS), 56 to 60 (DTGGI), 118 to 121 (NKVD), 190 to 197 (GRPNVGKS), 237 to 241 (DTAGV), and 302 to 305 (NKWD) contribute to the GTP site. Residues 359–443 (KKITTADATR…PIVFEFKQSE (85 aa)) form the KH-like domain. Positions 446–465 (FADRKNKRSKDEGSKSKKVK) are disordered.

This sequence belongs to the TRAFAC class TrmE-Era-EngA-EngB-Septin-like GTPase superfamily. EngA (Der) GTPase family. Associates with the 50S ribosomal subunit.

Its function is as follows. GTPase that plays an essential role in the late steps of ribosome biogenesis. In Francisella tularensis subsp. novicida (strain U112), this protein is GTPase Der.